Consider the following 376-residue polypeptide: N-acetyldiaminopimelate deacetylase (376 aa).

The active site involves aspartate 69. The Proton acceptor role is filled by glutamate 128.

It belongs to the peptidase M20A family. N-acetyldiaminopimelate deacetylase subfamily.

The catalysed reaction is N-acetyl-(2S,6S)-2,6-diaminopimelate + H2O = (2S,6S)-2,6-diaminopimelate + acetate. It participates in amino-acid biosynthesis; L-lysine biosynthesis via DAP pathway; LL-2,6-diaminopimelate from (S)-tetrahydrodipicolinate (acetylase route): step 3/3. In terms of biological role, catalyzes the conversion of N-acetyl-diaminopimelate to diaminopimelate and acetate. This Bacillus cereus (strain ATCC 14579 / DSM 31 / CCUG 7414 / JCM 2152 / NBRC 15305 / NCIMB 9373 / NCTC 2599 / NRRL B-3711) protein is N-acetyldiaminopimelate deacetylase.